Here is a 336-residue protein sequence, read N- to C-terminus: Major histocompatibility complex class I-related protein 1 (336 aa).

An N-terminal signal peptide occupies residues 1-18 (MMLLLPLIIVLMMKLSDA). The alpha-1 stretch occupies residues 19–105 (RTHSLRYFRL…KQLQHHYNHS (87 aa)). The segment at 19 to 197 (RTHSLRYFRL…EYGKDALQRT (179 aa)) is antigen-binding cleft. The Extracellular segment spans residues 19–298 (RTHSLRYFRL…QESETILLVV (280 aa)). 8-(9H-purin-6-yl)-2-oxa-8-azabicyclo[3.3.1]nona-3,6-diene-4,6-dicarbaldehyde is bound by residues Tyr25 and Arg27. 5-(2-oxoethylideneamino)-6-(D-ribitylamino)uracil is bound by residues Arg27, Ser42, and Lys61. Residues Arg27, Ser42, and Lys61 each contribute to the 5-(2-oxopropylideneamino)-6-(D-ribitylamino)uracil site. 7-hydroxy-6-methyl-8-(1-D-ribityl)lumazine contacts are provided by Arg27, Ser42, and Lys61. 8-(9H-purin-6-yl)-2-oxa-8-azabicyclo[3.3.1]nona-3,6-diene-4,6-dicarbaldehyde contacts are provided by Lys61 and His76. Lys61 serves as a coordination point for 2-amino-4-oxopteridine-6-carbaldehyde. A pyridoxal-binding site is contributed by Lys61. An N-linked (GlcNAc...) asparagine glycan is attached at Asn103. Residues 106–197 (GFHTYQRMIG…EYGKDALQRT (92 aa)) are alpha-2. An 8-(9H-purin-6-yl)-2-oxa-8-azabicyclo[3.3.1]nona-3,6-diene-4,6-dicarbaldehyde-binding site is contributed by Arg112. The 5-(2-oxoethylideneamino)-6-(D-ribitylamino)uracil site is built by Arg112, Tyr170, and Gln171. Residues Arg112, Tyr170, and Gln171 each contribute to the 5-(2-oxopropylideneamino)-6-(D-ribitylamino)uracil site. 7-hydroxy-6-methyl-8-(1-D-ribityl)lumazine is bound by residues Arg112, Tyr170, and Gln171. 2 cysteine pairs are disulfide-bonded: Cys116–Cys179 and Cys218–Cys274. Residues 198–289 (EPPKVRVNHK…GVHMVLQGFQ (92 aa)) form an alpha-3 region. One can recognise an Ig-like C1-type domain in the interval 200 to 295 (PKVRVNHKET…QGFQESETIL (96 aa)). Residues 290 to 298 (ESETILLVV) form a connecting peptide region. The chain crosses the membrane as a helical span at residues 299-319 (KAVGFIVLAIALAGVGILAWR). Residues 320–336 (KRPRGKNKVICLSTPEH) are Cytoplasmic-facing.

This sequence belongs to the MHC class I family. As to quaternary structure, heterotrimer that consists of MR1, B2M and metabolite antigen. Major classes of metabolite ligands presented by MR1 include riboflavin-related antigens, pyrimidines and ribityl lumazines, nucleobase adducts and folate derivatives. Forms reversible covalent Schiff base complexes with microbial pyrimidine-based metabolite, which serves as a molecular switch triggering complete folding, stable association with B2M and translocation of the ternary complex from endoplasmic reticulum to the plasma membrane. Alternatively, forms non-Schiff base complexes with ribityl lumazines. On antigen-presenting cells, the ternary complex interacts with TCR on MR1-restricted T cells. Interacts with TAPBP and TAPBPL chaperones in the endoplasmic reticulum. TAPBP associated or not with MHC class I peptide loading complex binds ligand-free MR1 or MR1-B2M complex, providing for stable MR1 pools ready for metabolite antigen processing. TAPBPL interacts with MR1 in a ligand-independent way; this interaction may stabilize MR1 pool and facilitate ligand loading and dissociation. Structurally, MR1-B2M heterodimer adopts a topology similar to classical MHC class I molecules, with alpha-1 and alpha-2 domains of MR1 forming the antigen-binding cleft composed of two alpha-helices resting on a floor of 7-stranded anti-parallel beta-pleated sheet. MR1-B2M heterodimer (via alpha-helices) interacts with TCR (via CDR domains). In terms of processing, N-glycosylated.

It is found in the cell membrane. Its subcellular location is the endoplasmic reticulum membrane. The protein localises to the golgi apparatus membrane. The protein resides in the early endosome membrane. It localises to the late endosome membrane. In terms of biological role, antigen-presenting molecule specialized in displaying microbial pyrimidine-based metabolites to alpha-beta T cell receptors (TCR) on innate-type mucosal-associated invariant T (MAIT) cells. In complex with B2M preferentially presents riboflavin-derived metabolites to semi-invariant TCRs on MAIT cells, guiding immune surveillance of the microbial metabolome at mucosal epithelial barriers. Signature pyrimidine-based microbial antigens are generated via non-enzymatic condensation of metabolite intermediates of the riboflavin pathway with by-products arising from other metabolic pathways such as glycolysis. Typical potent antigenic metabolites are 5-(2-oxoethylideneamino)-6-D-ribitylaminouracil (5-OE-RU) and 5-(2-oxopropylideneamino)-6-D-ribitylaminouracil (5-OP-RU), products of condensation of 5-amino-6-D-ribityaminouracil (5-A-RU) with glyoxal or methylglyoxal by-products, respectively. May present microbial antigens to various MAIT cell subsets, providing for unique recognition of diverse microbes, including pathogens that do not synthesize riboflavin. Upon antigen recognition, elicits rapid innate-type MAIT cell activation to eliminate pathogenic microbes by directly killing infected cells. During T cell development, drives thymic selection and post-thymic terminal differentiation of MAIT cells in a process dependent on commensal microflora. Acts as an immune sensor of cancer cell metabolome. May present a tumor-specific or -associated metabolite essential for cancer cell survival to a pan-cancer TCR on a non-MAIT CD8-positive T cell clone, triggering T cell-mediated killing of a wide range of cancer cell types. May present tumor-enriched pyridoxal and pyridoxal 5'-phosphate antigens, enabling preferential recognition of cancer cells. Presents nucleobase carbonyl adducts generated during oxidative stress. Captures M3Ade, a nucleobase adduct composed of one adenine modified by a malondialdehyde trimer, for recognition by MR1-restricted T cell clones expressing a polyclonal TCR repertoire. In Bos taurus (Bovine), this protein is Major histocompatibility complex class I-related protein 1.